Reading from the N-terminus, the 296-residue chain is DNA primase small subunit PriS (296 aa).

Residues D82, D84, and D191 contribute to the active site.

Belongs to the eukaryotic-type primase small subunit family. In terms of assembly, heterodimer of a small subunit (PriS) and a large subunit (PriL). Requires Mg(2+) as cofactor. The cofactor is Mn(2+).

In terms of biological role, catalytic subunit of DNA primase, an RNA polymerase that catalyzes the synthesis of short RNA molecules used as primers for DNA polymerase during DNA replication. The small subunit contains the primase catalytic core and has DNA synthesis activity on its own. Binding to the large subunit stabilizes and modulates the activity, increasing the rate of DNA synthesis while decreasing the length of the DNA fragments, and conferring RNA synthesis capability. The DNA polymerase activity may enable DNA primase to also catalyze primer extension after primer synthesis. May also play a role in DNA repair. The chain is DNA primase small subunit PriS from Methanopyrus kandleri (strain AV19 / DSM 6324 / JCM 9639 / NBRC 100938).